A 415-amino-acid polypeptide reads, in one-letter code: Serine hydroxymethyltransferase (415 aa).

(6S)-5,6,7,8-tetrahydrofolate is bound by residues L117 and 121-123 (GHL). K226 is subject to N6-(pyridoxal phosphate)lysine. Residue 349–351 (SPF) coordinates (6S)-5,6,7,8-tetrahydrofolate.

Belongs to the SHMT family. In terms of assembly, homodimer. The cofactor is pyridoxal 5'-phosphate.

It localises to the cytoplasm. The catalysed reaction is (6R)-5,10-methylene-5,6,7,8-tetrahydrofolate + glycine + H2O = (6S)-5,6,7,8-tetrahydrofolate + L-serine. It participates in one-carbon metabolism; tetrahydrofolate interconversion. Its pathway is amino-acid biosynthesis; glycine biosynthesis; glycine from L-serine: step 1/1. Catalyzes the reversible interconversion of serine and glycine with tetrahydrofolate (THF) serving as the one-carbon carrier. This reaction serves as the major source of one-carbon groups required for the biosynthesis of purines, thymidylate, methionine, and other important biomolecules. Also exhibits THF-independent aldolase activity toward beta-hydroxyamino acids, producing glycine and aldehydes, via a retro-aldol mechanism. The sequence is that of Serine hydroxymethyltransferase from Geobacter sp. (strain M21).